A 243-amino-acid polypeptide reads, in one-letter code: Ubiquinone/menaquinone biosynthesis C-methyltransferase UbiE (243 aa).

S-adenosyl-L-methionine-binding positions include Thr69, Asp90, and 116-117 (DA).

Belongs to the class I-like SAM-binding methyltransferase superfamily. MenG/UbiE family.

The enzyme catalyses a 2-demethylmenaquinol + S-adenosyl-L-methionine = a menaquinol + S-adenosyl-L-homocysteine + H(+). It carries out the reaction a 2-methoxy-6-(all-trans-polyprenyl)benzene-1,4-diol + S-adenosyl-L-methionine = a 5-methoxy-2-methyl-3-(all-trans-polyprenyl)benzene-1,4-diol + S-adenosyl-L-homocysteine + H(+). It functions in the pathway quinol/quinone metabolism; menaquinone biosynthesis; menaquinol from 1,4-dihydroxy-2-naphthoate: step 2/2. The protein operates within cofactor biosynthesis; ubiquinone biosynthesis. Methyltransferase required for the conversion of demethylmenaquinol (DMKH2) to menaquinol (MKH2) and the conversion of 2-polyprenyl-6-methoxy-1,4-benzoquinol (DDMQH2) to 2-polyprenyl-3-methyl-6-methoxy-1,4-benzoquinol (DMQH2). This is Ubiquinone/menaquinone biosynthesis C-methyltransferase UbiE from Cupriavidus pinatubonensis (strain JMP 134 / LMG 1197) (Cupriavidus necator (strain JMP 134)).